Reading from the N-terminus, the 1966-residue chain is Dedicator of cytokinesis protein 4 (1966 aa).

Residues 6 to 67 enclose the SH3 domain; the sequence is EHEKYGVVIA…PSSYVHLKNA (62 aa). A Phosphotyrosine modification is found at tyrosine 167. A Phosphothreonine modification is found at threonine 193. Positions 401–574 constitute a C2 DOCK-type domain; that stretch reads RNDLYITIER…ESFCITSFLC (174 aa). The DOCKER domain occupies 1190–1596; the sequence is KTELNKEEMY…LGIQEFSACM (407 aa). 6 positions are modified to phosphoserine: serine 1599, serine 1607, serine 1614, serine 1618, serine 1620, and serine 1631. 2 disordered regions span residues 1648 to 1729 and 1742 to 1966; these read SQAS…IYPT and IGDG…VSQL. The span at 1672-1703 shows a compositional bias: low complexity; the sequence is PSPSTSSLSSTHSASPNVTSSAPSSARASPLL. Phosphoserine is present on serine 1769. The SH3-binding motif lies at 1788–1794; it reads PPVPPRP. The segment covering 1795–1809 has biased composition (polar residues); sequence TQTASPARHTTSVSP. A compositionally biased stretch (low complexity) spans 1838 to 1863; it reads SNSPVLSGSYSSGISSLSRCSTSETS. Residues 1864–1873 show a composition bias toward polar residues; that stretch reads GFENQVNEQS. A compositionally biased stretch (basic and acidic residues) spans 1941–1954; it reads SHLENGARRTDPGP.

It belongs to the DOCK family. In terms of assembly, interacts with nucleotide-free Rap1; functions as a guanine nucleotide exchange factor (GEF) for Rap1. Interacts (via DOCKER domain) with RAC1; functions as a guanine nucleotide exchange factor (GEF) for RAC1. Interacts with the SH3 domain of CRK. Interacts with FASLG. Interacts with ELMO2 and EPHA2; mediates activation of RAC1 by EPHA2. Interacts with USH1C (via PDZ 1 domain). As to expression, widely expressed at low level. Highly expressed in skeletal muscle, prostate and ovary. May be specifically expressed in the brain and eye.

Its subcellular location is the cell membrane. It is found in the cell projection. The protein resides in the cytoplasm. It localises to the cytosol. In terms of biological role, functions as a guanine nucleotide exchange factor (GEF) that promotes the exchange of GDP to GTP, converting inactive GDP-bound small GTPases into their active GTP-bound form. Involved in regulation of adherens junction between cells. Plays a role in cell migration. Its function is as follows. Has a higher guanine nucleotide exchange factor activity compared to other isoforms. The sequence is that of Dedicator of cytokinesis protein 4 (DOCK4) from Homo sapiens (Human).